Here is a 312-residue protein sequence, read N- to C-terminus: Beta-lactamase regulatory protein BlaB (312 aa).

The sequence is that of Beta-lactamase regulatory protein BlaB (blaB) from Streptomyces cacaoi.